The sequence spans 527 residues: Cytochrome P450 monooxygenase olcJ (527 aa).

A helical membrane pass occupies residues 21 to 43 (GLLTRYNVFMAISITVTALYLIH). Cys464 lines the heme pocket.

The protein belongs to the cytochrome P450 family. Requires heme as cofactor.

The protein localises to the membrane. It participates in secondary metabolite biosynthesis; terpenoid biosynthesis. Cytochrome P450 monooxygenase; part of the gene cluster that mediates the biosynthesis of 15-deoxyoxalicine B. The first step of the pathway is the synthesis of nicotinyl-CoA from nicotinic acid by the nicotinic acid-CoA ligase olcI. Nicotinyl-CoA is then a substrate of polyketide synthase olcA to produce 4-hydroxy-6-(3-pyridinyl)-2H-pyran-2-one (HPPO) which is further prenylated by the polyprenyl transferase olcH to yield geranylgeranyl-HPPO. Geranylgeranyl pyrophosphate is provided by the cluster-specific geranylgeranyl pyrophosphate synthase olcC. The FAD-dependent monooxygenase olcE catalyzes the epoxidation of geranylgeranyl-HPPO and the terpene cyclase olcD catalyzes the cyclization of the terpenoid component, resulting in the formation of the tricyclic terpene moiety seen in predecaturin E. The cytochrome P450 monooxygenase then catalyzes the allylic oxidation of predecaturin E, which is followed by spirocylization with concomitant loss of one molecule of water to form decaturin E. Decaturin E is the substrate of the cytochrome P450 monooxygenase olcJ which hydroxylates it at the C-29 position to form decaturin F. The short-chain dehydrogenase/reductase olcF may catalyze the oxidation of decaturin F to generate the 29-hydroxyl-27-one intermediate, and subsequent hemiacetal formation probably leads to the formation of decaturin C. The dioxygenase olcK may be a peroxisomal enzyme that catalyzes the hydroxylation of decaturin C into decaturin A once decaturin C is shuttled into the peroxisome by the MFS transporter olcL. Finally the cytochrome P450 monooxygenase olcB catalyzes the oxidative rearrangement to yield 15-deoxyoxalicine B. In the absence of olcJ, decaturin E may be shunted to a pathway in which it is oxidized to a ketone, possibly by olcF, to form decaturin D, which undergoes further allylic oxidation to yield decaturin G. Moreover, in the absence of oclK or oclL, oclB can convert decaturin C into 15-deoxyoxalicine A. In Penicillium canescens, this protein is Cytochrome P450 monooxygenase olcJ.